The primary structure comprises 168 residues: ATP synthase subunit b (168 aa).

Residues 10 to 30 (LYLGDMLFYLVSFLIMAALVW) traverse the membrane as a helical segment. The interval 61–80 (EAQKLAAKRQEELKGSRQEA) is disordered.

This sequence belongs to the ATPase B chain family. In terms of assembly, F-type ATPases have 2 components, F(1) - the catalytic core - and F(0) - the membrane proton channel. F(1) has five subunits: alpha(3), beta(3), gamma(1), delta(1), epsilon(1). F(0) has three main subunits: a(1), b(2) and c(10-14). The alpha and beta chains form an alternating ring which encloses part of the gamma chain. F(1) is attached to F(0) by a central stalk formed by the gamma and epsilon chains, while a peripheral stalk is formed by the delta and b chains.

The protein localises to the cell membrane. Functionally, f(1)F(0) ATP synthase produces ATP from ADP in the presence of a proton or sodium gradient. F-type ATPases consist of two structural domains, F(1) containing the extramembraneous catalytic core and F(0) containing the membrane proton channel, linked together by a central stalk and a peripheral stalk. During catalysis, ATP synthesis in the catalytic domain of F(1) is coupled via a rotary mechanism of the central stalk subunits to proton translocation. Its function is as follows. Component of the F(0) channel, it forms part of the peripheral stalk, linking F(1) to F(0). The chain is ATP synthase subunit b from Limosilactobacillus fermentum (strain NBRC 3956 / LMG 18251) (Lactobacillus fermentum).